A 66-amino-acid polypeptide reads, in one-letter code: Beta-toxin Cbo2 (66 aa).

Residues 1–66 (KEGYIVNYHD…VWPLPKKTCN (66 aa)) enclose the LCN-type CS-alpha/beta domain. Cystine bridges form between Cys12-Cys65, Cys16-Cys41, Cys25-Cys46, and Cys29-Cys48. Asparagine amide is present on Asn66.

It belongs to the long (4 C-C) scorpion toxin superfamily. Sodium channel inhibitor family. Beta subfamily. As to expression, expressed by the venom gland.

It localises to the secreted. In terms of biological role, beta toxins bind voltage-independently at site-4 of sodium channels and shift the voltage of activation toward more negative potentials thereby affecting sodium channel activation and promoting spontaneous and repetitive firing. A mixture of Cbo2 and Cbo3 is weakly active on the human voltage-gated sodium channels Nav1.4/SCN4A and Nav1.6/SCN8A when tested at 200 nM. In vivo, is toxic to mice when intraperitoneally injected. The polypeptide is Beta-toxin Cbo2 (Centruroides bonito (Scorpion)).